A 200-amino-acid polypeptide reads, in one-letter code: dITP/XTP pyrophosphatase (200 aa).

Residue Thr-7–Lys-12 participates in substrate binding. Glu-38 and Asp-73 together coordinate Mg(2+). Asp-73 acts as the Proton acceptor in catalysis. Residues Ser-74, Phe-154–Asp-157, Lys-177, and His-182–Arg-183 each bind substrate.

This sequence belongs to the HAM1 NTPase family. As to quaternary structure, homodimer. The cofactor is Mg(2+).

It catalyses the reaction XTP + H2O = XMP + diphosphate + H(+). The catalysed reaction is dITP + H2O = dIMP + diphosphate + H(+). It carries out the reaction ITP + H2O = IMP + diphosphate + H(+). Pyrophosphatase that catalyzes the hydrolysis of nucleoside triphosphates to their monophosphate derivatives, with a high preference for the non-canonical purine nucleotides XTP (xanthosine triphosphate), dITP (deoxyinosine triphosphate) and ITP. Seems to function as a house-cleaning enzyme that removes non-canonical purine nucleotides from the nucleotide pool, thus preventing their incorporation into DNA/RNA and avoiding chromosomal lesions. The polypeptide is dITP/XTP pyrophosphatase (Campylobacter jejuni subsp. doylei (strain ATCC BAA-1458 / RM4099 / 269.97)).